A 798-amino-acid polypeptide reads, in one-letter code: Penicillin-binding protein 1A (798 aa).

Over 1 to 9 (MIKKIITTC) the chain is Cytoplasmic. A helical; Signal-anchor for type II membrane protein transmembrane segment spans residues 10–30 (MGLNNGLALFGVGLIAIAILV). Residues 31 to 798 (TYPKLPSLDS…NNRQQLDSLF (768 aa)) are Periplasmic-facing. A transglycosylase region spans residues 50–218 (LTIYSSDGQV…SAYNPIVNPE (169 aa)). Glu88 acts as the Proton donor; for transglycosylase activity in catalysis. The segment at 413 to 699 (TVVQEPLLQG…GTIAVPVWVE (287 aa)) is transpeptidase. The Acyl-ester intermediate; for transpeptidase activity role is filled by Ser460. The segment at 734–798 (TSSDLALDNS…NNRQQLDSLF (65 aa)) is disordered. Over residues 782 to 798 (LPSNTGNNNRQQLDSLF) the composition is skewed to polar residues.

This sequence in the N-terminal section; belongs to the glycosyltransferase 51 family. The protein in the C-terminal section; belongs to the transpeptidase family.

The protein resides in the cell inner membrane. It catalyses the reaction [GlcNAc-(1-&gt;4)-Mur2Ac(oyl-L-Ala-gamma-D-Glu-L-Lys-D-Ala-D-Ala)](n)-di-trans,octa-cis-undecaprenyl diphosphate + beta-D-GlcNAc-(1-&gt;4)-Mur2Ac(oyl-L-Ala-gamma-D-Glu-L-Lys-D-Ala-D-Ala)-di-trans,octa-cis-undecaprenyl diphosphate = [GlcNAc-(1-&gt;4)-Mur2Ac(oyl-L-Ala-gamma-D-Glu-L-Lys-D-Ala-D-Ala)](n+1)-di-trans,octa-cis-undecaprenyl diphosphate + di-trans,octa-cis-undecaprenyl diphosphate + H(+). The catalysed reaction is Preferential cleavage: (Ac)2-L-Lys-D-Ala-|-D-Ala. Also transpeptidation of peptidyl-alanyl moieties that are N-acyl substituents of D-alanine.. It participates in cell wall biogenesis; peptidoglycan biosynthesis. Functionally, cell wall formation. Synthesis of cross-linked peptidoglycan from the lipid intermediates. The enzyme has a penicillin-insensitive transglycosylase N-terminal domain (formation of linear glycan strands) and a penicillin-sensitive transpeptidase C-terminal domain (cross-linking of the peptide subunits). This is Penicillin-binding protein 1A (mrcA) from Neisseria flavescens.